The sequence spans 466 residues: Bifunctional protein GlmU (466 aa).

The tract at residues 1 to 236 (MEVMPQPLTI…PAEALGINDR (236 aa)) is pyrophosphorylase. Residues 13–16 (LAAG), Lys-27, Gln-79, 84–85 (GT), 107–109 (YGD), Gly-146, Glu-161, Asn-176, and Asn-234 each bind UDP-N-acetyl-alpha-D-glucosamine. Asp-109 is a Mg(2+) binding site. Asn-234 is a Mg(2+) binding site. The tract at residues 237–257 (AQLAEVDRIFRDRKRRAVMAA) is linker. The segment at 258 to 466 (GVTLIQPETI…AKKRRKLAKT (209 aa)) is N-acetyltransferase. Positions 340 and 358 each coordinate UDP-N-acetyl-alpha-D-glucosamine. His-370 acts as the Proton acceptor in catalysis. Positions 373 and 384 each coordinate UDP-N-acetyl-alpha-D-glucosamine. Residues Ala-387, 393–394 (NY), Ser-412, Ala-430, and Arg-447 contribute to the acetyl-CoA site.

It in the N-terminal section; belongs to the N-acetylglucosamine-1-phosphate uridyltransferase family. The protein in the C-terminal section; belongs to the transferase hexapeptide repeat family. In terms of assembly, homotrimer. Requires Mg(2+) as cofactor.

It is found in the cytoplasm. The catalysed reaction is alpha-D-glucosamine 1-phosphate + acetyl-CoA = N-acetyl-alpha-D-glucosamine 1-phosphate + CoA + H(+). It catalyses the reaction N-acetyl-alpha-D-glucosamine 1-phosphate + UTP + H(+) = UDP-N-acetyl-alpha-D-glucosamine + diphosphate. The protein operates within nucleotide-sugar biosynthesis; UDP-N-acetyl-alpha-D-glucosamine biosynthesis; N-acetyl-alpha-D-glucosamine 1-phosphate from alpha-D-glucosamine 6-phosphate (route II): step 2/2. Its pathway is nucleotide-sugar biosynthesis; UDP-N-acetyl-alpha-D-glucosamine biosynthesis; UDP-N-acetyl-alpha-D-glucosamine from N-acetyl-alpha-D-glucosamine 1-phosphate: step 1/1. It participates in bacterial outer membrane biogenesis; LPS lipid A biosynthesis. Catalyzes the last two sequential reactions in the de novo biosynthetic pathway for UDP-N-acetylglucosamine (UDP-GlcNAc). The C-terminal domain catalyzes the transfer of acetyl group from acetyl coenzyme A to glucosamine-1-phosphate (GlcN-1-P) to produce N-acetylglucosamine-1-phosphate (GlcNAc-1-P), which is converted into UDP-GlcNAc by the transfer of uridine 5-monophosphate (from uridine 5-triphosphate), a reaction catalyzed by the N-terminal domain. The polypeptide is Bifunctional protein GlmU (Solibacter usitatus (strain Ellin6076)).